Reading from the N-terminus, the 114-residue chain is T cell receptor alpha variable 24 (114 aa).

The N-terminal stretch at 1–22 (MEKNPLAAPLLILWFHLDCVSS) is a signal peptide. The Ig-like domain maps to 23-114 (ILNVEQSPQS…EDSATYLCAF (92 aa)). N-linked (GlcNAc...) asparagine glycosylation occurs at N42. A disulfide bond links C45 and C112.

In terms of assembly, alpha-beta TR is a heterodimer composed of an alpha and beta chain; disulfide-linked. The alpha-beta TR is associated with the transmembrane signaling CD3 coreceptor proteins to form the TR-CD3 (TcR or TCR). The assembly of alpha-beta TR heterodimers with CD3 occurs in the endoplasmic reticulum where a single alpha-beta TR heterodimer associates with one CD3D-CD3E heterodimer, one CD3G-CD3E heterodimer and one CD247 homodimer forming a stable octameric structure. CD3D-CD3E and CD3G-CD3E heterodimers preferentially associate with TR alpha and TR beta chains, respectively. The association of the CD247 homodimer is the last step of TcR assembly in the endoplasmic reticulum and is required for transport to the cell surface.

The protein resides in the cell membrane. Functionally, v region of the variable domain of T cell receptor (TR) alpha chain that participates in the antigen recognition. Alpha-beta T cell receptors are antigen specific receptors which are essential to the immune response and are present on the cell surface of T lymphocytes. Recognize peptide-major histocompatibility (MH) (pMH) complexes that are displayed by antigen presenting cells (APC), a prerequisite for efficient T cell adaptive immunity against pathogens. Binding of alpha-beta TR to pMH complex initiates TR-CD3 clustering on the cell surface and intracellular activation of LCK that phosphorylates the ITAM motifs of CD3G, CD3D, CD3E and CD247 enabling the recruitment of ZAP70. In turn ZAP70 phosphorylates LAT, which recruits numerous signaling molecules to form the LAT signalosome. The LAT signalosome propagates signal branching to three major signaling pathways, the calcium, the mitogen-activated protein kinase (MAPK) kinase and the nuclear factor NF-kappa-B (NF-kB) pathways, leading to the mobilization of transcription factors that are critical for gene expression and essential for T cell growth and differentiation. The T cell repertoire is generated in the thymus, by V-(D)-J rearrangement. This repertoire is then shaped by intrathymic selection events to generate a peripheral T cell pool of self-MH restricted, non-autoaggressive T cells. Post-thymic interaction of alpha-beta TR with the pMH complexes shapes TR structural and functional avidity. This chain is T cell receptor alpha variable 24, found in Homo sapiens (Human).